We begin with the raw amino-acid sequence, 126 residues long: Acidic phospholipase A2 4 (126 aa).

S1 is a signal peptide. The propeptide occupies N2 to L7. Disulfide bonds link C18/C78, C33/C125, C35/C51, C50/C106, C57/C99, C67/C92, and C85/C97. Y34, G36, and G38 together coordinate Ca(2+). H54 is a catalytic residue. Position 55 (D55) interacts with Ca(2+). The active site involves D100.

This sequence belongs to the phospholipase A2 family. Group I subfamily. D49 sub-subfamily. As to quaternary structure, monomer. Ca(2+) is required as a cofactor. Expressed by the venom gland.

The protein localises to the secreted. It carries out the reaction a 1,2-diacyl-sn-glycero-3-phosphocholine + H2O = a 1-acyl-sn-glycero-3-phosphocholine + a fatty acid + H(+). Snake venom phospholipase A2 (PLA2) that exhibits strong anticoagulant activity, which is not due to the catalytic activity. PLA2 catalyzes the calcium-dependent hydrolysis of the 2-acyl groups in 3-sn-phosphoglycerides. The protein is Acidic phospholipase A2 4 of Naja sagittifera (Andaman cobra).